A 378-amino-acid chain; its full sequence is Flap endonuclease 1 (378 aa).

Residues 1–102 (MGIHGLAKLI…GELAKRSERR (102 aa)) form an N-domain region. Symmetric dimethylarginine; by PRMT5 is present on R19. D34 serves as a coordination point for Mg(2+). R47 and R69 together coordinate DNA. The residue at position 78 (K78) is an N6-acetyllysine. D84 is a Mg(2+) binding site. 2 positions are modified to symmetric dimethylarginine; by PRMT5: R98 and R102. Positions 120–251 (EVEKFTKRLV…KRAVDLIQKH (132 aa)) are I-domain. Residues E156, E158, D177, and D179 each contribute to the Mg(2+) site. E156 contacts DNA. S185 bears the Phosphoserine; by CDK2 mark. Position 190 is a symmetric dimethylarginine; by PRMT5 (R190). S195 carries the post-translational modification Phosphoserine. Positions 229 and 231 each coordinate DNA. D231 serves as a coordination point for Mg(2+). S253, S291, and S333 each carry phosphoserine. Residues 325–378 (RLSKSRQGSTQGRLDDFFKVTGSLSSAKRKEPEPKGPAKKKAKTGGAGKFRRGK) form a disordered region. T334 is subject to Phosphothreonine. The tract at residues 334–342 (TQGRLDDFF) is interaction with PCNA. N6-acetyllysine occurs at positions 352, 373, and 378. Residues 361–378 (PAKKKAKTGGAGKFRRGK) show a composition bias toward basic residues.

Belongs to the XPG/RAD2 endonuclease family. FEN1 subfamily. Interacts with PCNA. Three molecules of FEN1 bind to one PCNA trimer with each molecule binding to one PCNA monomer. PCNA stimulates the nuclease activity without altering cleavage specificity. The C-terminal domain binds EP300; can bind simultaneously to both PCNA and EP300. Interacts with DDX11; this interaction is direct and increases flap endonuclease activity of FEN1. Interacts with WDR4; regulating its endonuclease activity. Interacts with POLB. Mg(2+) serves as cofactor. Post-translationally, acetylated by EP300. Acetylation inhibits both endonuclease and exonuclease activity. Acetylation also reduces DNA-binding activity but does not affect interaction with PCNA or EP300. In terms of processing, phosphorylation upon DNA damage induces relocalization to the nuclear plasma. Phosphorylation at Ser-185 by CDK2 occurs during late S-phase and results in dissociation from PCNA. Methylation at Arg-190 by PRMT5 impedes Ser-185 phosphorylation and increases interaction with PCNA.

The protein resides in the nucleus. Its subcellular location is the nucleolus. It is found in the nucleoplasm. The protein localises to the mitochondrion. Structure-specific nuclease with 5'-flap endonuclease and 5'-3' exonuclease activities involved in DNA replication and repair. During DNA replication, cleaves the 5'-overhanging flap structure that is generated by displacement synthesis when DNA polymerase encounters the 5'-end of a downstream Okazaki fragment. It enters the flap from the 5'-end and then tracks to cleave the flap base, leaving a nick for ligation. Also involved in the long patch base excision repair (LP-BER) pathway, by cleaving within the apurinic/apyrimidinic (AP) site-terminated flap. Acts as a genome stabilization factor that prevents flaps from equilibrating into structures that lead to duplications and deletions. Also possesses 5'-3' exonuclease activity on nicked or gapped double-stranded DNA, and exhibits RNase H activity. Also involved in replication and repair of rDNA and in repairing mitochondrial DNA. The chain is Flap endonuclease 1 from Mus musculus (Mouse).